The sequence spans 104 residues: Large ribosomal subunit protein uL23 (104 aa).

The protein belongs to the universal ribosomal protein uL23 family. In terms of assembly, part of the 50S ribosomal subunit. Contacts protein L29, and trigger factor when it is bound to the ribosome.

One of the early assembly proteins it binds 23S rRNA. One of the proteins that surrounds the polypeptide exit tunnel on the outside of the ribosome. Forms the main docking site for trigger factor binding to the ribosome. The protein is Large ribosomal subunit protein uL23 of Paraburkholderia phytofirmans (strain DSM 17436 / LMG 22146 / PsJN) (Burkholderia phytofirmans).